The following is a 71-amino-acid chain: Small ribosomal subunit protein bS21B (71 aa).

This sequence belongs to the bacterial ribosomal protein bS21 family.

The polypeptide is Small ribosomal subunit protein bS21B (Rhizobium johnstonii (strain DSM 114642 / LMG 32736 / 3841) (Rhizobium leguminosarum bv. viciae)).